The chain runs to 388 residues: Cdc42 effector protein 1 (388 aa).

The tract at residues 1–28 (MPGPQGGTGAPSMSLGKLSPVGWVPSSH) is disordered. A phosphoserine mark is found at Ser19 and Ser27. Residue Thr34 is modified to Phosphothreonine. Positions 38-52 (ISPPLGDFRHTMHVG) constitute a CRIB domain. The residue at position 39 (Ser39) is a Phosphoserine. Position 53 is an omega-N-methylarginine (Arg53). Residues Ser65, Ser77, Ser101, Ser113, Ser121, and Ser139 each carry the phosphoserine modification. The segment at 165–206 (RLPRVEKHSSRDRDHDRDPDHSQDREQSSSPSEPNPNPELRR) is disordered. Positions 167-191 (PRVEKHSSRDRDHDRDPDHSQDREQ) are enriched in basic and acidic residues. A phosphoserine mark is found at Ser193, Ser207, Ser209, and Ser212. Repeat copies occupy residues 237-243 (PAANPPA) and 250-256 (PTAKPPA). Residues 237-257 (PAANPPAPAANPAPTAKPPAD) form a disordered region. Positions 237 to 270 (PAANPPAPAANPAPTAKPPADAVTTLDTVTSLPA) are 2 X 7 AA tandem repeats of [PT]-[AT]-A-[ENT]-[PT]-[PTS]-[AG]. Pro residues predominate over residues 239–253 (ANPPAPAANPAPTAK). Residues Ser298, Ser318, Ser347, and Ser350 each carry the phosphoserine modification.

The protein belongs to the BORG/CEP family. As to quaternary structure, interacts with RHOQ and CDC42, in a GTP-dependent manner.

It is found in the endomembrane system. It localises to the cytoplasm. Its subcellular location is the cytoskeleton. In terms of biological role, probably involved in the organization of the actin cytoskeleton. Induced membrane extensions in fibroblasts. The protein is Cdc42 effector protein 1 of Rattus norvegicus (Rat).